The chain runs to 162 residues: Tegument protein BLRF2 (162 aa).

The stretch at 12–43 (VKAVDMSMEDMAARLARLESENKALKQQVLRG) forms a coiled coil. The interval 121-162 (GAKGQPSPGEGTRLRESNDPNATRRARSRSRGREAKKVQISD) is disordered. Over residues 151–162 (RGREAKKVQISD) the composition is skewed to basic and acidic residues.

It belongs to the herpesviridae BLRF2 family. As to quaternary structure, homooligomer; homooligomerizes and binds double-stranded DNA (dsDNA) cooperatively. Interacts with host CGAS.

It is found in the virion tegument. It localises to the host cytoplasm. Its function is as follows. Plays a role in the inhibition of host innate immune system by targeting the CGAS enzymatic activity which is the principal cytosolic DNA sensor that detects invading viral DNA. Acts by inhibiting CGAS-DNA phase separation: directly binds double-stranded DNA (dsDNA) in a length dependent but sequence independent manner and is able to form DNA-induced phase separation in infected cells. DNA phase separation of ORF52 mediates disruption of liquid-like droplets in which CGAS is activated, thereby preventing CGAS activity. The polypeptide is Tegument protein BLRF2 (Epstein-Barr virus (strain GD1) (HHV-4)).